Reading from the N-terminus, the 371-residue chain is MGVHKKGYLVLEDGSVIEGKAFGAETIRYGEVVFTTAMVGYPESLTDPSYKGQILIATNPLMGTYGVSSKSLKEHGLPLHYESDSIKVEGFVISFLMRPNHWSSEMTLDEWLRREGVPGLYGVDTRALVKKIREEGVMRGAIVTTETDLEEILENIRKISYESTNFVELVSPKNPIVHTPKNVKFRVVVLDLGVKFGILRELLKRGIEVVRIPWNWDILEAYYSYNADGIFISNGPGNPTLLKEVAKRIRKAFNEEIPMMGICLGQQLLALADGAEIYKLKYGHRGINKPVKDLESGKAFVTTQNHGYAIVPESLNEFKVWMVNLDDNSVEGIKHESLPIIATQYHPEASPGPWDSLWVFDEFVKILEGRK.

Residues 1–182 (MGVHKKGYLV…KNPIVHTPKN (182 aa)) are CPSase. L-glutamine-binding residues include Ser49, Gly235, and Gly237. The Glutamine amidotransferase type-1 domain maps to 186-371 (RVVVLDLGVK…EFVKILEGRK (186 aa)). The Nucleophile role is filled by Cys263. Leu264, Gln267, Asn305, Gly307, and Tyr308 together coordinate L-glutamine. Residues His346 and Glu348 contribute to the active site.

This sequence belongs to the CarA family. In terms of assembly, composed of two chains; the small (or glutamine) chain promotes the hydrolysis of glutamine to ammonia, which is used by the large (or ammonia) chain to synthesize carbamoyl phosphate. Tetramer of heterodimers (alpha,beta)4.

The catalysed reaction is hydrogencarbonate + L-glutamine + 2 ATP + H2O = carbamoyl phosphate + L-glutamate + 2 ADP + phosphate + 2 H(+). The enzyme catalyses L-glutamine + H2O = L-glutamate + NH4(+). The protein operates within amino-acid biosynthesis; L-arginine biosynthesis; carbamoyl phosphate from bicarbonate: step 1/1. It participates in pyrimidine metabolism; UMP biosynthesis via de novo pathway; (S)-dihydroorotate from bicarbonate: step 1/3. Functionally, small subunit of the glutamine-dependent carbamoyl phosphate synthetase (CPSase). CPSase catalyzes the formation of carbamoyl phosphate from the ammonia moiety of glutamine, carbonate, and phosphate donated by ATP, constituting the first step of 2 biosynthetic pathways, one leading to arginine and/or urea and the other to pyrimidine nucleotides. The small subunit (glutamine amidotransferase) binds and cleaves glutamine to supply the large subunit with the substrate ammonia. The chain is Carbamoyl phosphate synthase small chain from Pyrococcus furiosus (strain ATCC 43587 / DSM 3638 / JCM 8422 / Vc1).